Here is a 246-residue protein sequence, read N- to C-terminus: Large ribosomal subunit protein uL3 (246 aa).

Disordered regions lie at residues 140 to 162 and 215 to 246; these read SHRSIGSTGGRQDPGKTFKNKKM and DVPLPGKFRENGSAGASQVEAAPEAPASEENA. Residue glutamine 151 is modified to N5-methylglutamine. Low complexity predominate over residues 234–246; the sequence is EAAPEAPASEENA.

The protein belongs to the universal ribosomal protein uL3 family. In terms of assembly, part of the 50S ribosomal subunit. Forms a cluster with proteins L14 and L19. Methylated by PrmB.

One of the primary rRNA binding proteins, it binds directly near the 3'-end of the 23S rRNA, where it nucleates assembly of the 50S subunit. In Methylorubrum populi (strain ATCC BAA-705 / NCIMB 13946 / BJ001) (Methylobacterium populi), this protein is Large ribosomal subunit protein uL3.